Consider the following 400-residue polypeptide: tRNA-specific adenosine deaminase 1 (400 aa).

The A to I editase domain occupies 76–400; sequence SIATGVKALP…WIPTRTDDVK (325 aa). Position 101 (histidine 101) interacts with Zn(2+). Glutamate 103 (proton donor) is an active-site residue. Residue arginine 108 coordinates 1D-myo-inositol hexakisphosphate. Zn(2+)-binding residues include cysteine 157 and cysteine 223. 1D-myo-inositol hexakisphosphate-binding residues include lysine 226, arginine 232, lysine 369, and arginine 375.

This sequence belongs to the ADAT1 family. 1D-myo-inositol hexakisphosphate serves as cofactor. The cofactor is Zn(2+).

It carries out the reaction adenosine(37) in tRNA(Ala) + H2O + H(+) = inosine(37) in tRNA(Ala) + NH4(+). Deaminates adenosine-37 to inosine in tRNA-Ala. The sequence is that of tRNA-specific adenosine deaminase 1 (TAD1) from Saccharomyces cerevisiae (strain ATCC 204508 / S288c) (Baker's yeast).